Here is a 216-residue protein sequence, read N- to C-terminus: Uracil-DNA glycosylase (216 aa).

Catalysis depends on D60, which acts as the Proton acceptor.

This sequence belongs to the uracil-DNA glycosylase (UDG) superfamily. UNG family.

The protein resides in the cytoplasm. The catalysed reaction is Hydrolyzes single-stranded DNA or mismatched double-stranded DNA and polynucleotides, releasing free uracil.. Functionally, excises uracil residues from the DNA which can arise as a result of misincorporation of dUMP residues by DNA polymerase or due to deamination of cytosine. The chain is Uracil-DNA glycosylase from Psychromonas ingrahamii (strain DSM 17664 / CCUG 51855 / 37).